A 209-amino-acid polypeptide reads, in one-letter code: Probable nicotinate-nucleotide adenylyltransferase (209 aa).

Belongs to the NadD family.

The enzyme catalyses nicotinate beta-D-ribonucleotide + ATP + H(+) = deamido-NAD(+) + diphosphate. It functions in the pathway cofactor biosynthesis; NAD(+) biosynthesis; deamido-NAD(+) from nicotinate D-ribonucleotide: step 1/1. In terms of biological role, catalyzes the reversible adenylation of nicotinate mononucleotide (NaMN) to nicotinic acid adenine dinucleotide (NaAD). This chain is Probable nicotinate-nucleotide adenylyltransferase, found in Shewanella woodyi (strain ATCC 51908 / MS32).